A 315-amino-acid chain; its full sequence is PIH1 domain-containing protein 2 (315 aa).

The protein belongs to the PIH1 family.

The polypeptide is PIH1 domain-containing protein 2 (PIH1D2) (Homo sapiens (Human)).